Consider the following 569-residue polypeptide: MFYMTGQEYDVVVVGSGAAGMVAALTAAHQGLSTVVVEKAPHYGGSTARSGGGVWIPNNEILKRDGVKDTPDEARKYLHAIIGDVVPAEKIDTYLDRGPEMLSFVLKHSPLKLCWVPGYSDYYPETPGGKPTGRSVEPKPFDANKLGPDLKGLEPPYGKVPMNMVVMQQDYVRLNQLKRHPRGVLRSLKVGIRATWGKVSGKNLVGMGRALIAPLRIGLREAGVPVLLNTALTDLYVEDGRVLGIYVRDTTAGDDAEPRLIRARHGVILGSGGFEHNEQMRVKYQRAPITTEWTVGAVANTGDGIVAAEKLGAALELMEDAWWGPTVPLVGAPWFALSERNSPGSIIVNMSGKRFMNESMPYVEACHHMYGGQYGQGPGPGENIPAWLIFDQQYRDRYIFAGLQPGQRIPSKWLESGVIVKADTLVELAEKTGLPADQFTSTIERFNGFARSGVDEDFHRGESAYDRYYGDPTNKPNPNLGEIKHGPFYAAKMVPGDLGTKGGIRTDVRGRALRDDDSVIEGLYAAGNVSSPVMGHTYPGPGGTIGPAMTFGYLAALDIAATAAASRKG.

FAD is bound at residue 10-39 (DVVVVGSGAAGMVAALTAAHQGLSTVVVEK). The disordered stretch occupies residues 127 to 148 (PGGKPTGRSVEPKPFDANKLGP).

It belongs to the FAD-dependent oxidoreductase 2 family. 3-oxosteroid dehydrogenase subfamily. Requires FAD as cofactor.

It catalyses the reaction a 3-oxosteroid + A = a 3-oxo-Delta(1)-steroid + AH2. It carries out the reaction a 3-oxo-Delta(4)-steroid + A = a 3-oxo-Delta(1,4)-steroid + AH2. Its function is as follows. Catalyzes the elimination of the C-1 and C-2 hydrogen atoms of the A-ring from the polycyclic ring structure of 3-ketosteroids. Is also involved in the formation of 1,4-androstadiene-3,17-dione (ADD) from 4-androstene-3,17-dione (AD) to. This is 3-oxosteroid 1-dehydrogenase (ksdD) from Mycolicibacterium smegmatis (strain ATCC 700084 / mc(2)155) (Mycobacterium smegmatis).